The sequence spans 396 residues: NADH-quinone oxidoreductase subunit D (396 aa).

The protein belongs to the complex I 49 kDa subunit family. As to quaternary structure, NDH-1 is composed of 14 different subunits. Subunits NuoB, C, D, E, F, and G constitute the peripheral sector of the complex.

The protein localises to the cell inner membrane. The enzyme catalyses a quinone + NADH + 5 H(+)(in) = a quinol + NAD(+) + 4 H(+)(out). In terms of biological role, NDH-1 shuttles electrons from NADH, via FMN and iron-sulfur (Fe-S) centers, to quinones in the respiratory chain. The immediate electron acceptor for the enzyme in this species is believed to be ubiquinone. Couples the redox reaction to proton translocation (for every two electrons transferred, four hydrogen ions are translocated across the cytoplasmic membrane), and thus conserves the redox energy in a proton gradient. This is NADH-quinone oxidoreductase subunit D from Methylobacterium sp. (strain 4-46).